The chain runs to 151 residues: MYSGEMTMVILLLIGLVAQSNLIAICASVLLIVQFSKMDFLFPYLETHGLELGLLFLLLSILVPIATDRVTTRDLLYNVSSLPGFLSIVGGILATHLNSEGLKLMQIDPSIIFGLIVGSVIGIIFFNGQPVGPLMAAGVAALFIEVLNWFH.

4 consecutive transmembrane segments (helical) span residues 9 to 29 (VILL…CASV), 47 to 67 (THGL…PIAT), 75 to 95 (LLYN…ILAT), and 111 to 131 (IIFG…GQPV).

Belongs to the UPF0756 family.

The protein localises to the cell membrane. The sequence is that of UPF0756 membrane protein Dred_1676 from Desulforamulus reducens (strain ATCC BAA-1160 / DSM 100696 / MI-1) (Desulfotomaculum reducens).